A 32-amino-acid chain; its full sequence is Sodium channel neurotoxin BmK NT2 (32 aa).

One can recognise an LCN-type CS-alpha/beta domain in the interval 2–32 (RDAYIAKPENCVYHCAGNEGCNNLCTCNGAT).

As to expression, expressed by the venom gland.

The protein localises to the secreted. Alpha toxins bind voltage-independently at site-3 of sodium channels (Nav) and inhibit the inactivation of the activated channels, thereby blocking neuronal transmission. This toxin dose-dependently delays inactivation of voltage-gated sodium channels (Nav) (EC(50)=0.91 uM), and shifts the steady-state activation and inactivation to hyperpolarized direction. In addition, it dose-dependently alters calcium dynamics and increases phosphorylation of MAP kinases 1/3 (MAPK1/MAPK3) and cAMP-response element binding (CREB) proteins in neocortical neurons. This effect is eliminated by tetrodotoxin, a Nav blocker. In Olivierus martensii (Manchurian scorpion), this protein is Sodium channel neurotoxin BmK NT2.